The sequence spans 389 residues: MPRNYLFSSESVSEGHPDKMADQISDAILDALLAQDPLSRVACETMVSTGFCTIAGEITTKAVIDYQKIARETINAIGYTSADTMGYSGDTAAIFVALDKQSVDIAQGVNEGEGIDLDQGAGDQGIMFGYACTETDVLMPMPIYYAHRLMEKHAELRKSGELAWARPDAKSQVTVRYVDDKPVSVEAVVISSQHSPDVDHDTIEKEIIEKVIRAVIPAELLHEGTQYFINPTGRFVIGGPVGDAGVTGRKIIVDTYGGMGSHGGGAFSGKDPSKVDRSSAYMGRYVAKNIVAAGLAEKCEIQVAYAIGVSQPMSVMVDTFGTGKLDDEAITELVKKHFDLRPKAIVQQLDLLRPIYKKSAAYGHFGRELPEFTWERTDKAAALRADAGL.

Residue histidine 16 coordinates ATP. Aspartate 18 is a binding site for Mg(2+). A K(+)-binding site is contributed by glutamate 44. The L-methionine site is built by glutamate 57 and glutamine 101. A flexible loop region spans residues 101–111 (QSVDIAQGVNE). ATP-binding positions include 168–170 (DAK), 234–235 (RF), aspartate 243, 249–250 (RK), alanine 266, and lysine 270. Residue aspartate 243 participates in L-methionine binding. Residue lysine 274 participates in L-methionine binding.

The protein belongs to the AdoMet synthase family. Homotetramer; dimer of dimers. Requires Mg(2+) as cofactor. K(+) is required as a cofactor.

It localises to the cytoplasm. The catalysed reaction is L-methionine + ATP + H2O = S-adenosyl-L-methionine + phosphate + diphosphate. It participates in amino-acid biosynthesis; S-adenosyl-L-methionine biosynthesis; S-adenosyl-L-methionine from L-methionine: step 1/1. Its function is as follows. Catalyzes the formation of S-adenosylmethionine (AdoMet) from methionine and ATP. The overall synthetic reaction is composed of two sequential steps, AdoMet formation and the subsequent tripolyphosphate hydrolysis which occurs prior to release of AdoMet from the enzyme. This Magnetococcus marinus (strain ATCC BAA-1437 / JCM 17883 / MC-1) protein is S-adenosylmethionine synthase.